The following is a 317-amino-acid chain: Taste receptor type 2 member 14 (317 aa).

Topologically, residues 1–7 are extracellular; that stretch reads MGGVIKS. The chain crosses the membrane as a helical span at residues 8–28; that stretch reads IFTFVLIVEFIIGNLGNSFIA. Residues 29-55 are Cytoplasmic-facing; sequence LVNCIDWVKGRKISSVDRILTALAISK. Residues 56–76 traverse the membrane as a helical segment; that stretch reads ISLVWLIFGSWCVSVFFPALF. The Extracellular portion of the chain corresponds to 77–87; that stretch reads ATEKMFRMLTN. Residues Thr-86 and Trp-89 each contribute to the cholesterol site. A helical membrane pass occupies residues 88–108; the sequence is IWTVINHFSVWLATGLGTFYF. Residues 109 to 129 lie on the Cytoplasmic side of the membrane; it reads LKIANFSNSIFLYLKWRVKKV. Residues 130-150 form a helical membrane-spanning segment; the sequence is VLVLLLVTSVFLFLNIALINI. The Extracellular portion of the chain corresponds to 151–184; the sequence is HINASINGYRRNKTCSSDSSNFTRFSSLIVLTST. 3 N-linked (GlcNAc...) asparagine glycosylation sites follow: Asn-153, Asn-162, and Asn-171. Val-180 provides a ligand contact to cholesterol. Residues 185–205 traverse the membrane as a helical segment; sequence VFIFIPFTLSLAMFLLLIFSM. Over 206–232 the chain is Cytoplasmic; the sequence is WKHRKKMQHTVKRSGDASTKAHRGVKS. The helical transmembrane segment at 233–253 threads the bilayer; sequence MMTFFLLYAIFSLSFFISVWT. Residues 254–261 are Extracellular-facing; it reads SERLEENL. A helical transmembrane segment spans residues 262–282; it reads IILSQVMGMAYPSCHSCVLIL. Residues Ser-265 and Met-268 each contribute to the cholesterol site. Residues 283-317 lie on the Cytoplasmic side of the membrane; the sequence is GNKKLRQASLSVLLWLRYMFKDGEPSGHKEFRESS.

The protein belongs to the G-protein coupled receptor T2R family. In terms of assembly, core component of the TAS2R14-GNAI1 complex, consisting of TAS2R14, GNAI1, GNB1 and GNG2; within the complex interacts with GNAI1. Core component of the TAS2R14-GNAT3 complex, consisting of TAS2R14, GNAT3, GNB1 and GNG2; within the complex interacts with GNAT3. Core component of the TAS2R14-GNAS2 complex, consisting of TAS2R14, GNAS2, GNB1 and GNG2; within the complex interacts with GNAS2.

It localises to the membrane. It catalyses the reaction Ca(2+)(in) = Ca(2+)(out). The catalysed reaction is 3',5'-cyclic AMP(in) = 3',5'-cyclic AMP(out). Its activity is regulated as follows. Basal activity is enhanced by binding to bitter tastants, such as flufenamic acid and aristolochic acid. Regulated by cholesterol in a concentration-dependent manner. Gustducin-linked G-protein coupled receptor that plays a role in the perception of bitterness. The activity of this receptor stimulates GNAT3, activating the gustducin G-protein pathway. Likely plays a role in sensing the chemical composition of the gastrointestinal content and other extra-oral tissues via the inhibitory G-protein pathways. This chain is Taste receptor type 2 member 14 (TAS2R14), found in Pan paniscus (Pygmy chimpanzee).